Consider the following 372-residue polypeptide: Lung adenoma susceptibility protein 2 (372 aa).

The signal sequence occupies residues 1–31; that stretch reads MAKSKTKHRLCSQESSVSALLASCTLSGSNS. Residue S161 is modified to Phosphoserine. The tract at residues 248–268 is disordered; sequence KSPVPVNSDDSPQQTSRAKSA. A compositionally biased stretch (polar residues) spans 255-265; sequence SDDSPQQTSRA.

The protein resides in the secreted. Might play a role in cell proliferation. The polypeptide is Lung adenoma susceptibility protein 2 (LAS2) (Homo sapiens (Human)).